Reading from the N-terminus, the 40-residue chain is uncharacterized protein (40 aa).

The N-terminal stretch at 1-27 (MFPADVILQCFGFSVGIALVGYVISLF) is a signal peptide.

This is an uncharacterized protein from Archaeoglobus fulgidus (strain ATCC 49558 / DSM 4304 / JCM 9628 / NBRC 100126 / VC-16).